We begin with the raw amino-acid sequence, 257 residues long: Acetylglutamate kinase (257 aa).

Residues 43–44 (GG), Arg-65, and Asn-157 each bind substrate.

The protein belongs to the acetylglutamate kinase family. ArgB subfamily.

It is found in the cytoplasm. The enzyme catalyses N-acetyl-L-glutamate + ATP = N-acetyl-L-glutamyl 5-phosphate + ADP. The protein operates within amino-acid biosynthesis; L-arginine biosynthesis; N(2)-acetyl-L-ornithine from L-glutamate: step 2/4. Catalyzes the ATP-dependent phosphorylation of N-acetyl-L-glutamate. The protein is Acetylglutamate kinase of Pasteurella multocida (strain Pm70).